Here is a 484-residue protein sequence, read N- to C-terminus: MENFHAQYVMLETIGHGGCSKVMLARHRLTGSHVAVKMIRKSECWCNPVMSEVELLMMADHPNIISLLQVIETKKKVYLIMELCEGKSLYQHIRNAGYLQEDEARALFKQLLSAMNYCHNQGIVHRDLKPDNIMVEKDGKVKIIDFGLGTQVKPGQKLNLFCGTYPFSAPEVLLSRPYDGPKIDVWTLGVVLYFMVTGKVPFDAASIQKLVRQILAGKYFVPSRLSVELRDLISLLMTANPKLRPTVAEVMVHPWVTEGSGVFPDPCEEQMPLKPNPAIVKAMGYIGFQAQDIEDSLRQRKFNETMASYCLLKKQILKECDRPIRAQPMNPSVTPFPSLVDTSTFHLGLRRRETEPTSLRLSANRQMSVCGRSTSKKRDRRFSWPSVSGRPLHTTHTMDHTHTRTRSVPCIYSMFCTIQPNSSDDSTEGHTSASAEDKPVRSRGWPRGIKGWTRKIGNVMRKLCCCIPSKETSHVGHSRVSPKK.

In terms of domain architecture, Protein kinase spans 8-256; sequence YVMLETIGHG…VAEVMVHPWV (249 aa). Residues 14 to 22 and Lys-37 contribute to the ATP site; that span reads IGHGGCSKV. The active-site Proton acceptor is Asp-127. One can recognise a UBA domain in the interval 272 to 314; it reads PLKPNPAIVKAMGYIGFQAQDIEDSLRQRKFNETMASYCLLKK. Composition is skewed to polar residues over residues 356-373 and 422-434; these read PTSL…CGRS and SSDD…TSAS. Disordered regions lie at residues 356 to 400 and 422 to 450; these read PTSL…TMDH and SSDD…RGIK.

This sequence belongs to the protein kinase superfamily. CAMK Ser/Thr protein kinase family. Smok subfamily. In terms of tissue distribution, testis-specific. Expressed in the testis from 22 days postpartum (22 dpp).

The catalysed reaction is L-seryl-[protein] + ATP = O-phospho-L-seryl-[protein] + ADP + H(+). It catalyses the reaction L-threonyl-[protein] + ATP = O-phospho-L-threonyl-[protein] + ADP + H(+). Its function is as follows. May play a role in sperm motility, especially in the regulation of flagellar function. The polypeptide is Sperm motility kinase 2B (Mus musculus (Mouse)).